A 545-amino-acid chain; its full sequence is 4-coumarate--CoA ligase 2 (545 aa).

Serine 192, serine 193, glycine 194, threonine 195, threonine 196, and lysine 200 together coordinate ATP. (E)-4-coumaroyl-AMP contacts are provided by tyrosine 242 and serine 246. Lysine 263 provides a ligand contact to CoA. The segment at 265-334 (DIAQFLELIP…AKFPNAKLGQ (70 aa)) is SBD1. 5 residues coordinate (E)-4-coumaroyl-AMP: alanine 312, glutamine 334, glycine 335, threonine 339, and methionine 347. 3 residues coordinate ATP: glutamine 334, glycine 335, and threonine 339. Residues 335–402 (GYGMTEAGPV…IRGDQIMKGY (68 aa)) form an SBD2 region. ATP is bound by residues aspartate 423 and arginine 438. The (E)-4-coumaroyl-AMP site is built by lysine 440 and lysine 444. Residues lysine 446 and glycine 447 each coordinate CoA. Residue lysine 529 participates in ATP binding.

Belongs to the ATP-dependent AMP-binding enzyme family. Mg(2+) serves as cofactor.

The enzyme catalyses (E)-4-coumarate + ATP + CoA = (E)-4-coumaroyl-CoA + AMP + diphosphate. It carries out the reaction (E)-4-coumarate + ATP + H(+) = (E)-4-coumaroyl-AMP + diphosphate. It catalyses the reaction (E)-4-coumaroyl-AMP + CoA = (E)-4-coumaroyl-CoA + AMP + H(+). It participates in phytoalexin biosynthesis; 3,4',5-trihydroxystilbene biosynthesis; 3,4',5-trihydroxystilbene from trans-4-coumarate: step 1/2. Its function is as follows. Carboxylate--CoA ligase that may use 4-coumarate as substrate. Follows a two-step reaction mechanism, wherein the carboxylate substrate first undergoes adenylation by ATP, followed by a thioesterification in the presence of CoA to yield the final CoA thioester. The protein is 4-coumarate--CoA ligase 2 (4CL2) of Solanum tuberosum (Potato).